We begin with the raw amino-acid sequence, 159 residues long: IQ domain-containing protein J (159 aa).

Residues 47 to 67 (ESKVKIIQRAWREYLQRQEPL) form the IQ domain. Residues 63-88 (RQEPLGKRSPSPPSVSSEKLSSSVSM) are disordered. The span at 76–87 (SVSSEKLSSSVS) shows a compositional bias: low complexity.

The chain is IQ domain-containing protein J from Homo sapiens (Human).